The following is a 140-amino-acid chain: Phosphoribosyl-AMP cyclohydrolase (140 aa).

Asp78 lines the Mg(2+) pocket. Cys79 provides a ligand contact to Zn(2+). The Mg(2+) site is built by Asp80 and Asp82. Positions 96 and 103 each coordinate Zn(2+).

The protein belongs to the PRA-CH family. As to quaternary structure, homodimer. The cofactor is Mg(2+). It depends on Zn(2+) as a cofactor.

The protein resides in the cytoplasm. It catalyses the reaction 1-(5-phospho-beta-D-ribosyl)-5'-AMP + H2O = 1-(5-phospho-beta-D-ribosyl)-5-[(5-phospho-beta-D-ribosylamino)methylideneamino]imidazole-4-carboxamide. The protein operates within amino-acid biosynthesis; L-histidine biosynthesis; L-histidine from 5-phospho-alpha-D-ribose 1-diphosphate: step 3/9. In terms of biological role, catalyzes the hydrolysis of the adenine ring of phosphoribosyl-AMP. This chain is Phosphoribosyl-AMP cyclohydrolase, found in Ralstonia pickettii (strain 12J).